Here is a 642-residue protein sequence, read N- to C-terminus: Terminase, large subunit (642 aa).

Residues 1 to 48 (MISDAQKAANAAGAIATGLLSLIIPVPLTTVQWANKHYYLPKESSYTP) form an interaction with the terminase small subunit region. Residues 42–51 (KESSYTPGRW) carry the Q motif motif. The short motif at 76 to 83 (KSARVGYT) is the Walker A motif element. The tract at residues 166–353 (NYREKSVDVV…LDALKDPNGL (188 aa)) is DNA packaging/ATPase. Residues 174 to 179 (VVCYDE) carry the Walker B motif motif. Glutamate 179 acts as the For ATPase activity in catalysis. Aspartate 401 is a Mg(2+) binding site. The tract at residues 401-587 (DSQRNRFEMY…LWDNKKRRNE (187 aa)) is endonuclease. 491-498 (GASVYGKP) is an ATP binding site. The segment at 574-585 (KMRLLWDNKKRR) is basic. A leucine zipper region spans residues 589–617 (LDCLVYAYAALRVSVQRWQLDLAVLAKSR). The tract at residues 611–642 (AVLAKSREEETTRPTLKELAAKLSGGVNGYSR) is prohead binding.

This sequence belongs to the lambdavirus large terminase family. Heterotrimer of two small and one large terminase subunits. The catalytically competent terminase is composed of a tetramer of heterotrimers. The tetramer forms a ring structure large enough to encircle duplex DNA. Host IHFA/IHFB induces bending of viral DNA to facilitate the assembly of the terminase tetramer of heterotrimers. Interacts (via N-terminus) with the terminase small subunit (via C-terminus). Interacts (via C-terminus) with the portal protein; this interaction allows the packaging of viral DNA. Mg(2+) is required as a cofactor.

Its subcellular location is the host cytoplasm. It catalyses the reaction Endonucleolytic cleavage of DNA to give specific double-stranded fragments with terminal 5'-phosphates.. The terminase large subunit acts as an ATP driven molecular motor necessary for viral DNA translocation into empty capsids and as an endonuclease that cuts the viral genome from the concetamer to initiate and to end the packaging reaction. The terminase lies at a unique vertex of the procapsid and is composed of two subunits, a small terminase subunit involved in viral DNA recognition (binding to packaging sequence cos), and a large terminase subunit possessing endonucleolytic and ATPase activities (DNA maturation and packaging). The terminase binds cooperatively with the host factor IHFA/IHFB to the cos site at the junction of adjacent viral genomes. The endonuclease activity cleaves the viral DNA generating 5'overhangs of 12 bp in length. The strand separation activity separates the cohesive ends generating the single-stranded 'sticky' ends of the mature genome. IHFA/IHFB is also necessary for the strand separation activity of the terminase. The terminase remains bound to the left end of the genome to be packaged, forming a stable DNA-terminase complex. In a reaction facilitated by the viral assembly catalyst gpFI, the DNA-terminase complex binds to the portal of the procapsid thereby activating the translocase activity of the terminase. The terminase packages the viral DNA into the procapsid until the next cos site on the concatemer reaches the complex. The downstream cos site is then cut generating the mature right end of the genome, the heterotrimer undocks from the DNA-filled head and remains bound to the left end of concatemer's next genome. The sequence is that of Terminase, large subunit (2) from Escherichia coli (Bacteriophage 21).